The following is a 230-amino-acid chain: Cytidylate kinase (230 aa).

17 to 25 (GPTASGKGT) lines the ATP pocket.

Belongs to the cytidylate kinase family. Type 1 subfamily.

The protein resides in the cytoplasm. It catalyses the reaction CMP + ATP = CDP + ADP. The enzyme catalyses dCMP + ATP = dCDP + ADP. The chain is Cytidylate kinase from Ralstonia nicotianae (strain ATCC BAA-1114 / GMI1000) (Ralstonia solanacearum).